Consider the following 796-residue polypeptide: Protein SEY1 homolog (796 aa).

Residues 1-701 (MESSNDFSNK…AGTSISSWRN (701 aa)) lie on the Cytoplasmic side of the membrane. The 235-residue stretch at 46-280 (GFRFNVVTIL…VPSDGFFVYS (235 aa)) folds into the GB1/RHD3-type G domain. 56–63 (GSQSSGKS) contributes to the GTP binding site. The stretch at 554–626 (SLVLLLKAAR…DALTLLKVLK (73 aa)) forms a coiled coil. The helical transmembrane segment at 702 to 722 (IPPIFWLVLLVLGWNELRSVF) threads the bilayer. The Lumenal portion of the chain corresponds to 723 to 725 (KVL). The chain crosses the membrane as a helical span at residues 726 to 746 (LRFYVVIPLLIVFYFTFSYSA). The Cytoplasmic portion of the chain corresponds to 747 to 796 (TKLLGPKADQYVKPVRDKVLSLFTALLAWFVRTLHMIASKSSSFKQRPAT).

The protein belongs to the TRAFAC class dynamin-like GTPase superfamily. GB1/RHD3 GTPase family. RHD3 subfamily.

It localises to the endoplasmic reticulum membrane. Functionally, probable GTP-binding protein that may be involved in cell development. The chain is Protein SEY1 homolog from Theileria parva (East coast fever infection agent).